The chain runs to 239 residues: Purine nucleoside phosphorylase DeoD-type (239 aa).

His5 contacts a purine D-ribonucleoside. Phosphate-binding positions include Gly21, Arg25, Arg44, and 88-91; that span reads RVGS. Residues 180-182 and 204-205 each bind a purine D-ribonucleoside; these read EME and SD. Asp205 functions as the Proton donor in the catalytic mechanism.

This sequence belongs to the PNP/UDP phosphorylase family. In terms of assembly, homohexamer; trimer of homodimers.

It carries out the reaction a purine D-ribonucleoside + phosphate = a purine nucleobase + alpha-D-ribose 1-phosphate. It catalyses the reaction a purine 2'-deoxy-D-ribonucleoside + phosphate = a purine nucleobase + 2-deoxy-alpha-D-ribose 1-phosphate. Catalyzes the reversible phosphorolytic breakdown of the N-glycosidic bond in the beta-(deoxy)ribonucleoside molecules, with the formation of the corresponding free purine bases and pentose-1-phosphate. The polypeptide is Purine nucleoside phosphorylase DeoD-type (Cronobacter sakazakii (strain ATCC BAA-894) (Enterobacter sakazakii)).